Reading from the N-terminus, the 528-residue chain is Phosphoenolpyruvate carboxykinase (ATP) (528 aa).

R56, Y192, and K198 together coordinate substrate. ATP is bound by residues K198, H217, and 233 to 241 (GLSGTGKTT). Mn(2+) contacts are provided by K198 and H217. D254 provides a ligand contact to Mn(2+). Positions 282, 319, and 444 each coordinate ATP. Residue R319 participates in substrate binding.

The protein belongs to the phosphoenolpyruvate carboxykinase (ATP) family. The cofactor is Mn(2+).

The protein resides in the cytoplasm. The enzyme catalyses oxaloacetate + ATP = phosphoenolpyruvate + ADP + CO2. It participates in carbohydrate biosynthesis; gluconeogenesis. Functionally, involved in the gluconeogenesis. Catalyzes the conversion of oxaloacetate (OAA) to phosphoenolpyruvate (PEP) through direct phosphoryl transfer between the nucleoside triphosphate and OAA. The protein is Phosphoenolpyruvate carboxykinase (ATP) of Bacillus pumilus (strain SAFR-032).